Consider the following 208-residue polypeptide: Thioesterase 1/protease 1/lysophospholipase L1 (208 aa).

A signal peptide spans 1 to 26 (MMNFNNVFRWHLPFLFLVLLTFRAAA). The Nucleophile role is filled by Ser-36. Residues Gly-70 and Asn-99 each contribute to the substrate site. Active-site residues include Asp-180 and His-183.

The protein belongs to the 'GDSL' lipolytic enzyme family. In terms of assembly, monomer or homotetramer.

The protein resides in the periplasm. The enzyme catalyses a fatty acyl-CoA + H2O = a fatty acid + CoA + H(+). The catalysed reaction is hexadecanoyl-CoA + H2O = hexadecanoate + CoA + H(+). It catalyses the reaction (9Z)-hexadecenoyl-CoA + H2O = (9Z)-hexadecenoate + CoA + H(+). It carries out the reaction octadecanoyl-CoA + H2O = octadecanoate + CoA + H(+). The enzyme catalyses (9Z)-octadecenoyl-CoA + H2O = (9Z)-octadecenoate + CoA + H(+). The catalysed reaction is (9Z)-octadecenoyl-[ACP] + H2O = (9Z)-octadecenoate + holo-[ACP] + H(+). It catalyses the reaction (11Z)-octadecenoyl-CoA + H2O = (11Z)-octadecenoate + CoA + H(+). It carries out the reaction tetradecanoyl-CoA + H2O = tetradecanoate + CoA + H(+). The enzyme catalyses (5Z,8Z,11Z,14Z)-eicosatetraenoyl-CoA + H2O = (5Z,8Z,11Z,14Z)-eicosatetraenoate + CoA + H(+). The catalysed reaction is dodecanoyl-CoA + H2O = dodecanoate + CoA + H(+). It catalyses the reaction decanoyl-CoA + H2O = decanoate + CoA + H(+). It carries out the reaction hexanoyl-CoA + H2O = hexanoate + CoA + H(+). The enzyme catalyses a 1-acyl-sn-glycero-3-phosphocholine + H2O = sn-glycerol 3-phosphocholine + a fatty acid + H(+). The catalysed reaction is a phenyl acetate + H2O = a phenol + acetate + H(+). It catalyses the reaction a butanoate ester + H2O = an aliphatic alcohol + butanoate + H(+). It carries out the reaction a hexanoate ester + H2O = an aliphatic alcohol + hexanoate + H(+). The enzyme catalyses an octanoate ester + H2O = an aliphatic alcohol + octanoate + H(+). Its function is as follows. TesA is a multifunctional esterase that can act as a thioesterase, arylesterase, lysophospholipase and protease. The sequence is that of Thioesterase 1/protease 1/lysophospholipase L1 (tesA) from Escherichia coli O6:H1 (strain CFT073 / ATCC 700928 / UPEC).